A 401-amino-acid polypeptide reads, in one-letter code: Glucose/mannose transporter GlcP (401 aa).

12 helical membrane-spanning segments follow: residues 11–31 (AFFFTVGIIHISTGSLTPFLL), 43–63 (VIIFFQFTGFLSGVLIAPLMI), 78–98 (IMLVALSIFFLTKDWYYIIVM), 99–119 (AFLLGYGAGTLETTVGSFVIA), 132–152 (EVLFGLGALSFPLLINSFIDI), 156–176 (FLPYYCIFTFLFVLFVGWLIF), 212–232 (LGFFVFFAFLYAGIETNFANF), 247–267 (LISVSFFWVGIIIGRILIGFV), 278–298 (LFSCSCLIVLLIAFSYISNPI), 306–326 (LIGLSIAGIFPIALTLASIII), 336–356 (LFIASASFGGAIISFLIGWSL), and 360–380 (TILLTMGIFTTMAVILVGISV).

This sequence belongs to the major facilitator superfamily.

It is found in the cell membrane. Its function is as follows. Can transport glucose, mannose, 2-deoxyglucose and methyl alpha-glucoside, but not galactose. The chain is Glucose/mannose transporter GlcP (glcP) from Bacillus subtilis (strain 168).